Consider the following 245-residue polypeptide: Type I iodothyronine deiodinase (245 aa).

Residues 1 to 9 are Extracellular-facing; it reads LSIRVLLHK. The chain crosses the membrane as a helical; Signal-anchor for type III membrane protein span at residues 10–30; the sequence is LLILLQVTLSVVVGKTMMILF. Topologically, residues 31-245 are cytoplasmic; it reads PDTTKRYILK…EIRAVLEKLK (215 aa). The active site involves Sec-123. Position 123 (Sec-123) is a non-standard amino acid, selenocysteine.

The protein belongs to the iodothyronine deiodinase family. Predominantly monomer. Can form homodimers but homodimerization is not essential for enzyme activity.

It is found in the cell membrane. It localises to the endoplasmic reticulum membrane. Its subcellular location is the basolateral cell membrane. The catalysed reaction is 3,3',5-triiodo-L-thyronine + iodide + A + H(+) = L-thyroxine + AH2. It catalyses the reaction 3,3',5'-triiodo-L-thyronine + iodide + A + H(+) = L-thyroxine + AH2. The enzyme catalyses 3,3'-diiodo-L-thyronine + iodide + A + H(+) = 3,3',5'-triiodo-L-thyronine + AH2. It carries out the reaction 3,3'-diiodo-L-thyronine + iodide + A + H(+) = 3,3',5-triiodo-L-thyronine + AH2. The catalysed reaction is 3'-iodo-L-thyronine + iodide + A + H(+) = 3',5'-diiodo-L-thyronine + AH2. It catalyses the reaction 3-iodo-L-thyronine + iodide + A + H(+) = 3,5-diiodo-L-thyronine + AH2. The enzyme catalyses 3-iodo-L-thyronine + iodide + A + H(+) = 3,3'-diiodo-L-thyronine + AH2. It carries out the reaction 3,3'-diiodothyronamine + iodide + A + H(+) = 3,3',5'-triiodothyronamine + AH2. The catalysed reaction is 3'-iodothyronamine + iodide + A + H(+) = 3',5'-diiodothyronamine + AH2. It catalyses the reaction 3-iodothyronamine + iodide + A + H(+) = 3,3'-diiodothyronamine + AH2. The enzyme catalyses 3,3'-diiodothyronamine + iodide + A + H(+) = 3,3',5-triiodothyronamine + AH2. It carries out the reaction 3-iodothyronamine + iodide + A + H(+) = 3,5-diiodothyronamine + AH2. The catalysed reaction is 3,3'-diiodo-L-thyronine sulfate + iodide + A + H(+) = 3,3',5'-triiodo-L-thyronine sulfate + AH2. It catalyses the reaction 3,3',5'-triiodo-L-thyronine sulfate + iodide + A + H(+) = L-thyroxine sulfate + AH2. The enzyme catalyses 3,3'-diiodo-L-thyronine sulfate + iodide + A + H(+) = 3,3',5-triiodo-L-thyronine sulfate + AH2. Plays a crucial role in the metabolism of thyroid hormones (TH) and has specific roles in TH activation and inactivation by deiodination. Catalyzes the deiodiantion of L-thyroxine (T4) to 3,5,3'-triiodothyronine (T3) and 3,3',5'-triiodothyronine (rT3) to 3,3'-diiodothyronine (3,3'-T2) via outer-ring deiodination (ORD). Catalyzes the deiodiantion of T4 to rT3, T3 to 3,3'-T2, 3,5-diiodothyronine (3,5-T2) to 3-monoiodothyronine (3-T1) and 3,3'-T2 to 3-T1 via inner-ring deiodination (IRD). Catalyzes the deiodiantion of 3',5'-diiodothyronine (3',5'-T2) to 3'-monoiodothyronine (3'-T1) via ORD. Catalyzes the phenolic ring deiodinations of 3,3',5'-triiodothyronamine, 3',5'-diiodothyronamine and 3,3'-diiodothyronamine as well as tyrosyl ring deiodinations of 3,5,3'-triiodothyronamine and 3,5-diiodothyronamine. Catalyzes the deiodination of L-thyroxine sulfate and 3,3',5-triiodo-L-thyronine sulfate via IRD and of 3,3',5'-triiodo-L-thyronine sulfate via ORD. The protein is Type I iodothyronine deiodinase (DIO1) of Gallus gallus (Chicken).